The primary structure comprises 233 residues: Large ribosomal subunit protein uL1 (233 aa).

It belongs to the universal ribosomal protein uL1 family. In terms of assembly, part of the 50S ribosomal subunit.

In terms of biological role, binds directly to 23S rRNA. The L1 stalk is quite mobile in the ribosome, and is involved in E site tRNA release. Its function is as follows. Protein L1 is also a translational repressor protein, it controls the translation of the L11 operon by binding to its mRNA. The protein is Large ribosomal subunit protein uL1 of Geobacillus thermodenitrificans (strain NG80-2).